Consider the following 1184-residue polypeptide: von Willebrand factor A domain-containing protein 3A (1184 aa).

The first 24 residues, Met-1–Gly-24, serve as a signal peptide directing secretion. The disordered stretch occupies residues Gly-40 to Gly-62. Polar residues predominate over residues Lys-50–Gly-62. The stretch at Thr-333–Leu-357 forms a coiled coil. The VWFA 1 domain occupies Arg-511 to Leu-708. A glycan (N-linked (GlcNAc...) asparagine) is linked at Asn-709. Residues Leu-729–Ser-780 are disordered. The segment covering Ser-765–Pro-776 has biased composition (basic and acidic residues). Residues Lys-959–Phe-1131 enclose the VWFA 2 domain.

The protein localises to the secreted. This chain is von Willebrand factor A domain-containing protein 3A (VWA3A), found in Homo sapiens (Human).